Reading from the N-terminus, the 112-residue chain is Large ribosomal subunit protein bL20c (112 aa).

Belongs to the bacterial ribosomal protein bL20 family.

It is found in the plastid. The protein localises to the chloroplast. Binds directly to 23S ribosomal RNA and is necessary for the in vitro assembly process of the 50S ribosomal subunit. It is not involved in the protein synthesizing functions of that subunit. This is Large ribosomal subunit protein bL20c (rpl20) from Anthoceros angustus (Hornwort).